The sequence spans 525 residues: Protein-serine O-palmitoleoyltransferase porcupine (525 aa).

The next 9 membrane-spanning stretches (helical) occupy residues 83 to 103, 125 to 145, 159 to 179, 220 to 240, 260 to 280, 301 to 318, 395 to 415, 467 to 487, and 505 to 525; these read VMQY…LCLL, LIIL…LAAV, GAQV…LLIW, FAYL…WVSF, LLPN…VAPA, VRSS…LLVA, SLLH…AFLA, NLAF…VLLG, and QAGY…LFIS. H398 is an active-site residue.

It belongs to the membrane-bound acyltransferase family. Porcupine subfamily. As to quaternary structure, interacts with wg and Wnt5.

It localises to the endoplasmic reticulum membrane. It carries out the reaction [Wnt protein]-L-serine + (9Z)-hexadecenoyl-CoA = [Wnt protein]-O-(9Z)-hexadecenoyl-L-serine + CoA. In terms of biological role, protein-serine O-palmitoleoyltransferase that acts as a key regulator of the Wnt signaling pathway by mediating the attachment of palmitoleate, a 16-carbon monounsaturated fatty acid (C16:1(9Z)), to Wnt proteins. Serine palmitoleoylation of Wnt proteins is required for efficient binding to frizzled receptors. Also facilitates the glycosylation of Wnt family members, including wg and Wnt5. The cotranslational disulfide bond formation of wg competes with the N-glycosylation. Porc stimulates the post-translational N-glycosylation by anchoring wg at the ER membrane, probably through acylation. The chain is Protein-serine O-palmitoleoyltransferase porcupine from Drosophila melanogaster (Fruit fly).